The following is a 429-amino-acid chain: Enolase (429 aa).

Gln167 provides a ligand contact to (2R)-2-phosphoglycerate. Glu209 (proton donor) is an active-site residue. Mg(2+)-binding residues include Asp246, Glu289, and Asp316. Residues Lys341, Arg370, Ser371, and Lys392 each contribute to the (2R)-2-phosphoglycerate site. The active-site Proton acceptor is the Lys341.

It belongs to the enolase family. Component of the RNA degradosome, a multiprotein complex involved in RNA processing and mRNA degradation. Requires Mg(2+) as cofactor.

It localises to the cytoplasm. It is found in the secreted. The protein localises to the cell surface. It carries out the reaction (2R)-2-phosphoglycerate = phosphoenolpyruvate + H2O. It functions in the pathway carbohydrate degradation; glycolysis; pyruvate from D-glyceraldehyde 3-phosphate: step 4/5. Catalyzes the reversible conversion of 2-phosphoglycerate (2-PG) into phosphoenolpyruvate (PEP). It is essential for the degradation of carbohydrates via glycolysis. The polypeptide is Enolase (Pseudomonas aeruginosa (strain LESB58)).